Reading from the N-terminus, the 502-residue chain is ATP synthase subunit alpha, chloroplastic (502 aa).

Residue 170–177 (GDRQTGKT) coordinates ATP.

This sequence belongs to the ATPase alpha/beta chains family. As to quaternary structure, F-type ATPases have 2 components, CF(1) - the catalytic core - and CF(0) - the membrane proton channel. CF(1) has five subunits: alpha(3), beta(3), gamma(1), delta(1), epsilon(1). CF(0) has four main subunits: a, b, b' and c.

Its subcellular location is the plastid. It is found in the chloroplast thylakoid membrane. It carries out the reaction ATP + H2O + 4 H(+)(in) = ADP + phosphate + 5 H(+)(out). Functionally, produces ATP from ADP in the presence of a proton gradient across the membrane. The alpha chain is a regulatory subunit. This Tupiella akineta (Green alga) protein is ATP synthase subunit alpha, chloroplastic.